A 407-amino-acid chain; its full sequence is MTLVKSILLALAAGHVAQAQLNTAAKAAGLLYFGTAVDNPDLSDSKYLVNLETADFGQITPANAMKWQPTEPSQGSYTFTQGDQIASLAKSNNDYLRCHNLVWYNQLPSYITSGSWTNATLIAALKEHINGVVTHYKGQCYAWDVVNEALNEDGTYRQNVFYQHIGEAYIPIAFAAAAAADPNAKLYYNDYNIEYAGAKATGAQGIVKLIQAAGGRIDGVGLQSHFIVGQTPSLATQKANMAAFTALGVDVAITELDIRMTLPDTSALQTQQSTDYQTTTTACVQTKGCVGITLWDYTDKYSWVPGTFSGQGDACPWDSNYNKKPAYYGILAGLQSGSGSSSSTSSTTLITTTTPTASSSTTSATTTSATSGAAHWGQCGGIGWSGPTICVSPYTCQVLNPYYSQCL.

The N-terminal stretch at 1–19 is a signal peptide; that stretch reads MTLVKSILLALAAGHVAQA. Residues 20 to 333 enclose the GH10 domain; that stretch reads QLNTAAKAAG…KPAYYGILAG (314 aa). Asn118 is a glycosylation site (N-linked (GlcNAc...) asparagine). Residue Glu148 is the Proton donor of the active site. Glu255 serves as the catalytic Nucleophile. A disulfide bridge links Cys283 with Cys289. The segment at 337-364 is disordered; that stretch reads GSGSSSSTSSTTLITTTTPTASSSTTSA. The region spanning 371 to 407 is the CBM1 domain; it reads SGAAHWGQCGGIGWSGPTICVSPYTCQVLNPYYSQCL.

The protein belongs to the glycosyl hydrolase 10 (cellulase F) family.

It localises to the secreted. The catalysed reaction is Endohydrolysis of (1-&gt;4)-beta-D-xylosidic linkages in xylans.. It functions in the pathway glycan degradation; xylan degradation. Its activity is regulated as follows. Inhibited by wheat xylanase inhibiting protein I (XIP-I). Functionally, endo-1,4-beta-xylanase involved in the hydrolysis of xylan, a major structural heterogeneous polysaccharide found in plant biomass representing the second most abundant polysaccharide in the biosphere, after cellulose. Shows an endo-mode of action on xylan forming mainly xylobiose and short-chain xylooligosaccharides (XOS). The polypeptide is Endo-1,4-beta-xylanase D (xynD) (Talaromyces funiculosus (Fruitlet core rot fungus)).